A 421-amino-acid polypeptide reads, in one-letter code: Enolase (421 aa).

Gln-162 serves as a coordination point for (2R)-2-phosphoglycerate. Glu-204 functions as the Proton donor in the catalytic mechanism. Mg(2+) is bound by residues Asp-241, Glu-284, and Asp-311. The (2R)-2-phosphoglycerate site is built by Lys-336, Arg-365, Ser-366, and Lys-387. The active-site Proton acceptor is the Lys-336.

Belongs to the enolase family. The cofactor is Mg(2+).

It is found in the cytoplasm. It localises to the secreted. Its subcellular location is the cell surface. The enzyme catalyses (2R)-2-phosphoglycerate = phosphoenolpyruvate + H2O. Its pathway is carbohydrate degradation; glycolysis; pyruvate from D-glyceraldehyde 3-phosphate: step 4/5. Catalyzes the reversible conversion of 2-phosphoglycerate (2-PG) into phosphoenolpyruvate (PEP). It is essential for the degradation of carbohydrates via glycolysis. The sequence is that of Enolase from Nitratiruptor sp. (strain SB155-2).